Consider the following 337-residue polypeptide: Transcription factor bHLH121 (337 aa).

In terms of domain architecture, bHLH spans 58 to 108 (ARKSQKAGREKLRREKLNEHFVELGNVLDPERPKNDKATILTDTVQLLKEL). The segment at 235–337 (VHIPQNPGNR…AGGQKPDDAK (103 aa)) is disordered. 2 stretches are compositionally biased toward basic and acidic residues: residues 244-263 (RSREPRAKVSRESRSEKAED) and 280-291 (SDKDTLQRPEKT). Residues 297 to 317 (NNNNNSIEESSHSSKCSSSPS) show a composition bias toward low complexity.

Homodimer. In terms of tissue distribution, expressed constitutively in roots, leaves, stems, and flowers.

The protein resides in the nucleus. The polypeptide is Transcription factor bHLH121 (BHLH121) (Arabidopsis thaliana (Mouse-ear cress)).